The sequence spans 64 residues: Alpha-conotoxin Lt14.1 (64 aa).

An N-terminal signal peptide occupies residues 1-20 (MKLSVMFIVFLMLTMPMTCA). Residues 21 to 50 (GISRSATNGGEADVRAHDKAANLMALLQER) constitute a propeptide that is removed on maturation. Disulfide bonds link Cys-52-Cys-60 and Cys-56-Cys-63. Residue Cys-63 is modified to Cysteine amide.

The protein belongs to the conotoxin L superfamily. May contain a 4-hydroxyproline. As to expression, expressed by the venom duct.

Its subcellular location is the secreted. Its function is as follows. Alpha-conotoxins act on postsynaptic membranes, they bind to the nicotinic acetylcholine receptors (nAChR) and thus inhibit them. This synthetic peptide displays analgesic activity in a hot plate assay. Analgesia is also observed against second phase pain in formalin-induced inflammatory pain model, and in a rat model of mechanically-induced pain. Effects downstream of nAChR are inhibition of calcium influx, inhibition of ERK1/2 phosphorylation and inhibition of c-fos/NOS expression. Genes associated with drug dependence are not up-regulated by this toxin. Treatment with this toxin reversed morphine withdrawal symptoms in mice. This is Alpha-conotoxin Lt14.1 from Conus litteratus (Lettered cone).